The sequence spans 325 residues: MSSDCWTPFHARLHQLLQRRSLLPTRSRLLLAVSGGQDSLALVQLLRGLQPHWHWSLAIAHCDHGWRSDSTANAEHLRQLADQWQLPFYCQRSPEPPRSEAAARTWRYQVLEAIAADIDAALLVTGHTASDRAETLLYNLTRGSHLQGLASLRWQRSLSDRLTLVRPFLGFTRAETSKMVQQFQLPVWEDSTNRDRRFARNRLRLEVLPQLRQINPQCDRHLANTAELLADEADWLAELTEQVYQQSLSERGLCRSQLAQQPIALQRRVLHAFLQDQLQRSPSTVQVEELRQLITAPQGSCSSSLPQRRVAVVAGDWLRLQSVDD.

34 to 39 is an ATP binding site; that stretch reads SGGQDS.

It belongs to the tRNA(Ile)-lysidine synthase family.

Its subcellular location is the cytoplasm. The enzyme catalyses cytidine(34) in tRNA(Ile2) + L-lysine + ATP = lysidine(34) in tRNA(Ile2) + AMP + diphosphate + H(+). Its function is as follows. Ligates lysine onto the cytidine present at position 34 of the AUA codon-specific tRNA(Ile) that contains the anticodon CAU, in an ATP-dependent manner. Cytidine is converted to lysidine, thus changing the amino acid specificity of the tRNA from methionine to isoleucine. The protein is tRNA(Ile)-lysidine synthase of Synechococcus sp. (strain ATCC 27144 / PCC 6301 / SAUG 1402/1) (Anacystis nidulans).